Consider the following 90-residue polypeptide: Bombyxin B-6 (90 aa).

An N-terminal signal peptide occupies residues 1–20; that stretch reads MMKTSVMFMLVVVISLMCSS. 3 disulfide bridges follow: Cys-30–Cys-76, Cys-42–Cys-89, and Cys-75–Cys-80. Positions 49 to 67 are cleaved as a propeptide — c peptide like; the sequence is GVAQYAPYFWTRQYLGSRG.

It belongs to the insulin family. In terms of assembly, heterodimer of a B chain and an A chain linked by two disulfide bonds.

The protein localises to the secreted. Its function is as follows. Brain peptide responsible for activation of prothoracic glands to produce ecdysone in insects. The chain is Bombyxin B-6 (BBXB6) from Bombyx mori (Silk moth).